Consider the following 1050-residue polypeptide: Diacylglycerol kinase iota (1050 aa).

Disordered regions lie at residues 53 to 74 (PSSSAGEERGATGGSSSSGSGA), 92 to 111 (AAAAAALEEPAAAGQKEKEE), and 328 to 356 (SLKASNRKKKRTSFKRKASKRGTEQETKG). A compositionally biased stretch (low complexity) spans 92–105 (AAAAAALEEPAAAG). A compositionally biased stretch (basic residues) spans 332–347 (SNRKKKRTSFKRKASK). In terms of domain architecture, DAGKc spans 367-502 (PLMKPLLVFV…DRWNLHVERN (136 aa)). ANK repeat units follow at residues 943–972 (GHCSLLHYAAKTGNGDIVKYILDHGPAELL) and 979–1008 (TGETALHKAACQRNRAVCQLLVDAGASLRQ). Positions 1048 to 1050 (TAV) match the PDZ-binding motif.

The protein belongs to the eukaryotic diacylglycerol kinase family. In terms of assembly, interacts (via PDZ-binding motif) with DLG4; controls the localization of DGKI to the synapse. Interacts (via PDZ-binding motif) with DLG1. Interacts (via PDZ-binding motif) with DLG2. Interacts (via PDZ-binding motif) with DLG3. May interact with RASGRP3; involved in the regulation of RASGRP3 activity. As to expression, in brain, expressed in the hippocampus and cerebellum with stronger expression in the Purkinje cell layer (at protein level). Expressed in kidney.

The protein resides in the cell projection. Its subcellular location is the axon. It localises to the dendrite. The protein localises to the presynapse. It is found in the postsynapse. The protein resides in the postsynaptic density. Its subcellular location is the synaptic cell membrane. It localises to the cytoplasmic vesicle. The protein localises to the secretory vesicle. It is found in the synaptic vesicle membrane. The protein resides in the cytoplasm. Its subcellular location is the cytosol. It localises to the nucleus. It catalyses the reaction a 1,2-diacyl-sn-glycerol + ATP = a 1,2-diacyl-sn-glycero-3-phosphate + ADP + H(+). The catalysed reaction is 1,2-di-(9Z-octadecenoyl)-sn-glycerol + ATP = 1,2-di-(9Z-octadecenoyl)-sn-glycero-3-phosphate + ADP + H(+). The enzyme catalyses 1-octadecanoyl-2-(5Z,8Z,11Z,14Z-eicosatetraenoyl)-sn-glycerol + ATP = 1-octadecanoyl-2-(5Z,8Z,11Z,14Z-eicosatetraenoyl)-sn-glycero-3-phosphate + ADP + H(+). It carries out the reaction 1-octadecanoyl-2-(9Z,12Z)-octadecadienoyl-sn-glycerol + ATP = 1-octadecanoyl-2-(9Z,12Z-octadecadienoyl)-sn-glycero-3-phosphate + ADP + H(+). The protein operates within lipid metabolism; glycerolipid metabolism. Its function is as follows. Diacylglycerol kinase that converts diacylglycerol/DAG into phosphatidic acid/phosphatidate/PA and regulates the respective levels of these two bioactive lipids. Thereby, acts as a central switch between the signaling pathways activated by these second messengers with different cellular targets and opposite effects in numerous biological processes. Has probably no preference for any of the diacylglycerols in terms of the acyl chain composition, especially for the acyl chain at the sn-2 position. By controlling the diacylglycerol/DAG-mediated activation of RASGRP3, negatively regulates the Rap1 signaling pathway. May play a role in presynaptic diacylglycerol/DAG signaling and control neurotransmitter release during metabotropic glutamate receptor-dependent long-term depression. The sequence is that of Diacylglycerol kinase iota from Mus musculus (Mouse).